We begin with the raw amino-acid sequence, 182 residues long: Plasmolipin (182 aa).

Residues 1-35 (MAEFPSKVSTRTSSPAQGVGASVSALRPDLGFVRS) are Cytoplasmic-facing. Serine 9 is subject to Phosphoserine. The 135-residue stretch at 32-166 (FVRSALGVLA…SAFFSFQAWR (135 aa)) folds into the MARVEL domain. Residues 36 to 56 (ALGVLALLQLALGLLVWALIA) form a helical membrane-spanning segment. The Extracellular segment spans residues 57–68 (DTPYHLYPAYGW). A helical transmembrane segment spans residues 69 to 89 (VMFVAVFLWLVTIVFFIIYLF). Residues 90–99 (QLHMKLYMVP) lie on the Cytoplasmic side of the membrane. Residues 100-120 (WPLVLLIFFVAATVLYITAFI) form a helical membrane-spanning segment. Residues 121-141 (ACAAAVDLTSLRGSRPYNQRS) are Extracellular-facing. Residues 142–162 (AASFFACLVMIAYGVSAFFSF) traverse the membrane as a helical segment. Over 163–182 (QAWRGVGSNAATSQMAGGYS) the chain is Cytoplasmic.

Belongs to the MAL family. Forms oligomers. In terms of processing, phosphorylated.

It localises to the membrane. It is found in the cell membrane. The protein localises to the myelin membrane. The protein resides in the apical cell membrane. Functionally, main component of the myelin sheath that plays an important role in myelin membrane biogenesis and myelination. Plays an essential function in apical endocytosis. Regulates epithelial development through the regulation of apical endocytosis. Part of the intracellular machinery that mediates basolateral-to-apical transport of ICAM-1, an essential adhesion receptor in epithelial cells, from the subapical compartment in hepatic epithelial cells. The sequence is that of Plasmolipin (Pllp) from Mus musculus (Mouse).